We begin with the raw amino-acid sequence, 893 residues long: UPF0182 protein CLK_3152 (893 aa).

7 helical membrane passes run 9-29 (IPLF…NFII), 49-69 (AIII…WMYY), 94-114 (LFFI…SSSY), 154-174 (VIIS…FILE), 202-222 (LAIV…IKIW), 246-266 (FYKI…LSIV), and 273-293 (VSIC…ASFL).

Belongs to the UPF0182 family.

It localises to the cell membrane. The protein is UPF0182 protein CLK_3152 of Clostridium botulinum (strain Loch Maree / Type A3).